Here is a 207-residue protein sequence, read N- to C-terminus: TM2 domain-containing protein 1 (207 aa).

The N-terminal stretch at 1 to 37 (MAAAWPSGPSAPEAVTARLVGVLWFVSVTTGPWGAVA) is a signal peptide. Residues 40 to 128 (AGGEESLKCE…YSYKVAVALS (89 aa)) are Extracellular-facing. 4 N-linked (GlcNAc...) asparagine glycosylation sites follow: Asn-72, Asn-75, Asn-87, and Asn-96. A TM2 domain is found at 118–166 (GYSYKVAVALSLFLGWLGADRFYLGYPALGLLKFCTVGFCGIGSLIDFI). The chain crosses the membrane as a helical span at residues 129 to 149 (LFLGWLGADRFYLGYPALGLL). Topologically, residues 150-153 (KFCT) are cytoplasmic. Residues 154–174 (VGFCGIGSLIDFILISMQIVG) form a helical membrane-spanning segment. Over 175–207 (PSDGSSYIIDYYGTRLTRLSITNETFRKTQLYP) the chain is Extracellular. N-linked (GlcNAc...) asparagine glycosylation is present at Asn-197.

This sequence belongs to the TM2 family. Interacts with APP beta-APP42 (amyloid-beta protein 42). N-glycosylated. Widely expressed.

It is found in the membrane. Functionally, may participate in amyloid-beta-induced apoptosis via its interaction with beta-APP42. The sequence is that of TM2 domain-containing protein 1 (TM2D1) from Homo sapiens (Human).